The chain runs to 271 residues: Phosphate import ATP-binding protein PstB (271 aa).

Residues 24 to 266 form the ABC transporter domain; the sequence is MIGKDVSVYY…PDDQRTQDYI (243 aa). 56–63 serves as a coordination point for ATP; it reads GPSGCGKS.

The protein belongs to the ABC transporter superfamily. Phosphate importer (TC 3.A.1.7) family. As to quaternary structure, the complex is composed of two ATP-binding proteins (PstB), two transmembrane proteins (PstC and PstA) and a solute-binding protein (PstS).

It is found in the cell inner membrane. The catalysed reaction is phosphate(out) + ATP + H2O = ADP + 2 phosphate(in) + H(+). Functionally, part of the ABC transporter complex PstSACB involved in phosphate import. Responsible for energy coupling to the transport system. The polypeptide is Phosphate import ATP-binding protein PstB (Agrobacterium fabrum (strain C58 / ATCC 33970) (Agrobacterium tumefaciens (strain C58))).